A 203-amino-acid polypeptide reads, in one-letter code: Thymidylate kinase (203 aa).

Gly-14–Ser-21 provides a ligand contact to ATP.

This sequence belongs to the thymidylate kinase family.

It carries out the reaction dTMP + ATP = dTDP + ADP. Its function is as follows. Phosphorylation of dTMP to form dTDP in both de novo and salvage pathways of dTTP synthesis. The sequence is that of Thymidylate kinase from Rickettsia africae (strain ESF-5).